The sequence spans 192 residues: Ciliary microtubule inner protein 3 (192 aa).

The tract at residues 24-108 (RAGAEGGPSL…SGQKVKAPHR (85 aa)) is disordered. The segment covering 55-64 (APRRPPRPRT) has biased composition (basic residues).

Belongs to the CIMIP3-like family. In terms of tissue distribution, detected in the sperm flagellum (at protein level).

The protein resides in the cytoplasm. It localises to the cytoskeleton. It is found in the flagellum axoneme. The sequence is that of Ciliary microtubule inner protein 3 from Bos taurus (Bovine).